The primary structure comprises 712 residues: Polyribonucleotide nucleotidyltransferase (712 aa).

Mg(2+) contacts are provided by Asp487 and Asp493. A KH domain is found at 554–613; that stretch reads PRIEVMNIPVDKIREVIGSGGKVIREIVEKTGAKINIEDDGTVKIASSSGKEIEAARKWI. The S1 motif domain occupies 623-691; the sequence is GQVYEGTVVK…ERGKVRLSMK (69 aa).

The protein belongs to the polyribonucleotide nucleotidyltransferase family. It depends on Mg(2+) as a cofactor.

The protein localises to the cytoplasm. The catalysed reaction is RNA(n+1) + phosphate = RNA(n) + a ribonucleoside 5'-diphosphate. In terms of biological role, involved in mRNA degradation. Catalyzes the phosphorolysis of single-stranded polyribonucleotides processively in the 3'- to 5'-direction. This is Polyribonucleotide nucleotidyltransferase from Rhizobium johnstonii (strain DSM 114642 / LMG 32736 / 3841) (Rhizobium leguminosarum bv. viciae).